A 157-amino-acid polypeptide reads, in one-letter code: SsrA-binding protein (157 aa).

Positions 136–151 (KRETSAKRDWSREKQR) are enriched in basic and acidic residues. The interval 136–157 (KRETSAKRDWSREKQRLLKQNS) is disordered.

The protein belongs to the SmpB family.

Its subcellular location is the cytoplasm. Its function is as follows. Required for rescue of stalled ribosomes mediated by trans-translation. Binds to transfer-messenger RNA (tmRNA), required for stable association of tmRNA with ribosomes. tmRNA and SmpB together mimic tRNA shape, replacing the anticodon stem-loop with SmpB. tmRNA is encoded by the ssrA gene; the 2 termini fold to resemble tRNA(Ala) and it encodes a 'tag peptide', a short internal open reading frame. During trans-translation Ala-aminoacylated tmRNA acts like a tRNA, entering the A-site of stalled ribosomes, displacing the stalled mRNA. The ribosome then switches to translate the ORF on the tmRNA; the nascent peptide is terminated with the 'tag peptide' encoded by the tmRNA and targeted for degradation. The ribosome is freed to recommence translation, which seems to be the essential function of trans-translation. This chain is SsrA-binding protein, found in Cereibacter sphaeroides (strain ATCC 17029 / ATH 2.4.9) (Rhodobacter sphaeroides).